We begin with the raw amino-acid sequence, 204 residues long: N-(5'-phosphoribosyl)anthranilate isomerase (204 aa).

This sequence belongs to the TrpF family.

The enzyme catalyses N-(5-phospho-beta-D-ribosyl)anthranilate = 1-(2-carboxyphenylamino)-1-deoxy-D-ribulose 5-phosphate. It functions in the pathway amino-acid biosynthesis; L-tryptophan biosynthesis; L-tryptophan from chorismate: step 3/5. In Oceanobacillus iheyensis (strain DSM 14371 / CIP 107618 / JCM 11309 / KCTC 3954 / HTE831), this protein is N-(5'-phosphoribosyl)anthranilate isomerase.